We begin with the raw amino-acid sequence, 487 residues long: Serine/threonine-protein kinase 4 (487 aa).

M1 is modified (N-acetylmethionine). T3 is modified (phosphothreonine). The Protein kinase domain maps to 30–281; it reads FDVLEKLGEG…ATQLLQHPFV (252 aa). Residues 36 to 44 and K59 each bind ATP; that span reads LGEGSYGSV. The Proton acceptor role is filled by D149. T183 is modified (phosphothreonine; by autocatalysis). Residue S265 is modified to Phosphoserine. Positions 290-310 form a coiled coil; it reads LRDLINEAMDVKLKRQEAQQR. The tract at residues 305–338 is disordered; the sequence is QEAQQREVDQDDEENSEEDELDSGTMVRAVGDDM. The segment covering 313–326 has biased composition (acidic residues); sequence DQDDEENSEEDELD. At S320 the chain carries Phosphoserine. Residues T340 and T367 each carry the phosphothreonine modification. Residue T387 is modified to Phosphothreonine; by PKB/AKT1. S410 and S414 each carry phosphoserine. Position 433 is a phosphotyrosine (Y433). The 48-residue stretch at 433–480 folds into the SARAH domain; it reads YEFLKSWTVEDLQKRLLALDPMMEQEIEEIRQKYQSKRQPILDAIEAK.

This sequence belongs to the protein kinase superfamily. STE Ser/Thr protein kinase family. STE20 subfamily. As to quaternary structure, homodimer; mediated via the coiled-coil region. Interacts with NORE1, which inhibits autoactivation. Interacts with and stabilizes SAV1. Interacts with RASSF1. Interacts with FOXO3. Interacts with RASSF2 (via SARAH domain). Interacts with AR, PKB/AKT1, TNNI3 and SIRT1. Interacts with DLG5 (via PDZ domain 3). Interacts with MARK3 and SCRIB in the presence of DLG5. Mg(2+) serves as cofactor. Post-translationally, autophosphorylated on serine and threonine residues. Phosphorylation at Thr-387 by PKB/AKT1, leads to inhibition of its: kinase activity, nuclear translocation and autophosphorylation at Thr-183. It also diminishes its cleavage by caspases and its ability to phosphorylate FOXO3. In terms of processing, proteolytically cleaved by caspase-3 during apoptosis at Asp-326 and Asp-349 resulting in a 37 kDa or a 39 kDa subunit respectively. The 39 kDa subunit is further cleaved into the 37 kDa form. Proteolytic cleavage results in kinase activation and nuclear translocation of the truncated form (MST1/N). It is less likely that cleavage at Asp-349 is a prerequisite for activation as this site is not conserved in the murine ortholog.

It is found in the cytoplasm. Its subcellular location is the nucleus. It catalyses the reaction L-seryl-[protein] + ATP = O-phospho-L-seryl-[protein] + ADP + H(+). The enzyme catalyses L-threonyl-[protein] + ATP = O-phospho-L-threonyl-[protein] + ADP + H(+). With respect to regulation, inhibited by the C-terminal non-catalytic region. Activated by caspase-cleavage. Full activation also requires homodimerization and autophosphorylation of Thr-183. Activated by RASSF1 which acts by preventing its dephosphorylation. Stress-activated, pro-apoptotic kinase which, following caspase-cleavage, enters the nucleus and induces chromatin condensation followed by internucleosomal DNA fragmentation. Key component of the Hippo signaling pathway which plays a pivotal role in organ size control and tumor suppression by restricting proliferation and promoting apoptosis. The core of this pathway is composed of a kinase cascade wherein STK3/MST2 and STK4/MST1, in complex with its regulatory protein SAV1, phosphorylates and activates LATS1/2 in complex with its regulatory protein MOB1, which in turn phosphorylates and inactivates YAP1 oncoprotein and WWTR1/TAZ. Phosphorylation of YAP1 by LATS2 inhibits its translocation into the nucleus to regulate cellular genes important for cell proliferation, cell death, and cell migration. STK3/MST2 and STK4/MST1 are required to repress proliferation of mature hepatocytes, to prevent activation of facultative adult liver stem cells (oval cells), and to inhibit tumor formation. Phosphorylates 'Ser-14' of histone H2B (H2BS14ph) during apoptosis. Phosphorylates FOXO3 upon oxidative stress, which results in its nuclear translocation and cell death initiation. Phosphorylates MOBKL1A, MOBKL1B and RASSF2. Phosphorylates TNNI3 (cardiac Tn-I) and alters its binding affinity to TNNC1 (cardiac Tn-C) and TNNT2 (cardiac Tn-T). Phosphorylates FOXO1 on 'Ser-212' and regulates its activation and stimulates transcription of PMAIP1 in a FOXO1-dependent manner. Phosphorylates SIRT1 and inhibits SIRT1-mediated p53/TP53 deacetylation, thereby promoting p53/TP53 dependent transcription and apoptosis upon DNA damage. Acts as an inhibitor of PKB/AKT1. Phosphorylates AR on 'Ser-650' and suppresses its activity by intersecting with PKB/AKT1 signaling and antagonizing formation of AR-chromatin complexes. The chain is Serine/threonine-protein kinase 4 (STK4) from Lemur catta (Ring-tailed lemur).